The primary structure comprises 235 residues: Protein GMH1 homolog (235 aa).

At 1–54 the chain is on the cytoplasmic side; the sequence is MSRSFRNGFRLLKLSQMDFERAWWDMANLFRAPRRVYRSITLRKQNINRYGRED. Residues 55 to 75 traverse the membrane as a helical segment; it reads FSFIVLFSCMIVISALLWALF. The Lumenal portion of the chain corresponds to 76-88; the sequence is YMNTPKGYVTTIT. A helical transmembrane segment spans residues 89–109; sequence FMLFVDFGAVGVIMATMYYFI. Topologically, residues 110–140 are cytoplasmic; it reads AKRFLMKSNDTILSSTDYQLEWNYCFDVHCN. Residues 141 to 161 traverse the membrane as a helical segment; that stretch reads SFFPSFVLLYVIQLFLLPVIT. The Lumenal segment spans residues 162 to 175; the sequence is RDNFISLFMGNTLY. Residues 176-196 form a helical membrane-spanning segment; sequence LVALCYYSYLTFIGYQILPFL. Residues 197-201 lie on the Cytoplasmic side of the membrane; it reads KNTHA. The chain crosses the membrane as a helical span at residues 202–222; it reads LLLPIPMFFIMWALSLLGFNV. Over 223 to 235 the chain is Lumenal; it reads PKHVVDVYFGKSA.

The protein belongs to the unc-50 family.

It localises to the endoplasmic reticulum membrane. Has a role in meiosis. The protein is Protein GMH1 homolog (mug16) of Schizosaccharomyces pombe (strain 972 / ATCC 24843) (Fission yeast).